The sequence spans 267 residues: Glucosamine-6-phosphate deaminase (267 aa).

Asp-71 (proton acceptor; for enolization step) is an active-site residue. Catalysis depends on Asp-140, which acts as the For ring-opening step. The active-site Proton acceptor; for ring-opening step is His-142. Catalysis depends on Glu-147, which acts as the For ring-opening step.

It belongs to the glucosamine/galactosamine-6-phosphate isomerase family. In terms of assembly, homohexamer.

It is found in the cytoplasm. It catalyses the reaction alpha-D-glucosamine 6-phosphate + H2O = beta-D-fructose 6-phosphate + NH4(+). It functions in the pathway nucleotide-sugar biosynthesis; UDP-N-acetyl-alpha-D-glucosamine biosynthesis; alpha-D-glucosamine 6-phosphate from D-fructose 6-phosphate: step 1/1. Functionally, catalyzes the reversible conversion of alpha-D-glucosamine 6-phosphate (GlcN-6P) into beta-D-fructose 6-phosphate (Fru-6P) and ammonium ion, a regulatory reaction step in de novo uridine diphosphate-N-acetyl-alpha-D-glucosamine (UDP-GlcNAc) biosynthesis via hexosamine pathway. The sequence is that of Glucosamine-6-phosphate deaminase from Caenorhabditis elegans.